Consider the following 185-residue polypeptide: Disulfide bond formation protein B (185 aa).

The Cytoplasmic portion of the chain corresponds to 1 to 25 (MLLFFVILGIFVLTILKAISKQRWS). A helical membrane pass occupies residues 26 to 42 (WLLLAASALSLELSALY). Over 43–60 (FQHVMQLEPCVMCVYERL) the chain is Periplasmic. The cysteines at positions 52 and 55 are disulfide-linked. The chain crosses the membrane as a helical span at residues 61-76 (AMLGILLAGLIGASSP). Over 77 to 83 (NNVFIRL) the chain is Cytoplasmic. Residues 84–101 (SAFLLWGISAVWGILLAI) traverse the membrane as a helical segment. Topologically, residues 102–156 (KHTDYQLHPSPFFTCDFFPNFPAWAPLHEWLPWLFNPTGDCSDIVWQFLGYSMPQ) are periplasmic. Cys-116 and Cys-142 are oxidised to a cystine. The helical transmembrane segment at 157 to 175 (WLIVSFSLYTLLFIIFAIS) threads the bilayer. Residues 176–185 (AVLKTKKQLF) lie on the Cytoplasmic side of the membrane.

This sequence belongs to the DsbB family.

Its subcellular location is the cell inner membrane. In terms of biological role, required for disulfide bond formation in some periplasmic proteins. Acts by oxidizing the DsbA protein. The sequence is that of Disulfide bond formation protein B from Psychromonas ingrahamii (strain DSM 17664 / CCUG 51855 / 37).